Reading from the N-terminus, the 1266-residue chain is Phosphatidylinositol 3,4,5-trisphosphate 5-phosphatase 2A (1266 aa).

The region spanning 15 to 111 is the SH2 domain; the sequence is WMHRDLSRAA…GLVTTLLYPV (97 aa). Residues 114 to 123 are compositionally biased toward basic and acidic residues; it reads EETTEDRDYS. Disordered regions lie at residues 114–159 and 879–951; these read EETT…NVTA and DMGG…DATT. Polar residues predominate over residues 136–159; the sequence is TASTSSMTGSALVSTDTPPENVTA. Basic and acidic residues-rich tracts occupy residues 915-924 and 931-944; these read RVSEEGEKSS and TKEE…KQDP. Residues 958 to 961 carry the NPXY motif motif; the sequence is NPAY. Tyrosine 961 carries the post-translational modification Phosphotyrosine. Disordered regions lie at residues 986-1132 and 1147-1174; these read PLAN…SALD and EVEY…SFPS. The segment covering 994–1012 has biased composition (low complexity); sequence PPAGSVGKSKPPSGSSAQG. The segment covering 1045 to 1056 has biased composition (pro residues); the sequence is RPPPDFPPPPLP. The SAM domain occupies 1203–1266; it reads SVDCSVGEWL…LLASLKQQQK (64 aa).

It belongs to the inositol 1,4,5-trisphosphate 5-phosphatase family. Post-translationally, tyrosine phosphorylated by the members of the SRC family after exposure to a diverse array of extracellular stimuli.

The protein resides in the cytoplasm. Its subcellular location is the cytosol. The protein localises to the cytoskeleton. It is found in the membrane. It localises to the cell projection. The protein resides in the filopodium. Its subcellular location is the lamellipodium. The protein localises to the nucleus. It is found in the nucleus speckle. The enzyme catalyses a 1,2-diacyl-sn-glycero-3-phospho-(1D-myo-inositol-3,4,5-trisphosphate) + H2O = a 1,2-diacyl-sn-glycero-3-phospho-(1D-myo-inositol-3,4-bisphosphate) + phosphate. In terms of biological role, phosphatidylinositol (PtdIns) phosphatase that specifically hydrolyzes the 5-phosphate of phosphatidylinositol-3,4,5-trisphosphate (PtdIns(3,4,5)P3) to produce PtdIns(3,4)P2, thereby negatively regulating the PI3K (phosphoinositide 3-kinase) pathways. Plays a central role in regulation of PI3K-dependent insulin signaling, although the precise molecular mechanisms and signaling pathways remain unclear. Part of a signaling pathway that regulates actin cytoskeleton remodeling. Required for the maintenance and dynamic remodeling of actin structures as well as in endocytosis, having a major impact on ligand-induced EGFR internalization and degradation. Participates in regulation of cortical and submembraneous actin. Regulates cell adhesion and cell spreading. Acts as a negative regulator of the FC-gamma-RIIA receptor (FCGR2A). Mediates signaling from the FC-gamma-RIIB receptor (FCGR2B), playing a central role in terminating signal transduction from activating immune/hematopoietic cell receptor systems. May also hydrolyze PtdIns(1,3,4,5)P4, and could thus affect the levels of the higher inositol polyphosphates like InsP6. The sequence is that of Phosphatidylinositol 3,4,5-trisphosphate 5-phosphatase 2A (inppl1a) from Danio rerio (Zebrafish).